A 147-amino-acid chain; its full sequence is Bis(5'-nucleosyl)-tetraphosphatase [asymmetrical] (147 aa).

Ala2 is modified (N-acetylalanine). Positions 2-139 (ALRACGLIIF…DMKAVLQEGH (138 aa)) constitute a Nudix hydrolase domain. A Nudix box motif is present at residues 43-64 (GHVEPGESDLQTALRETQEEAG).

This sequence belongs to the Nudix hydrolase family. It depends on a divalent metal cation as a cofactor.

The enzyme catalyses P(1),P(4)-bis(5'-guanosyl) tetraphosphate + H2O = GMP + GTP + 2 H(+). The catalysed reaction is a 5'-end CoA-ribonucleoside in mRNA + H2O = a 5'-end phospho-adenosine-phospho-ribonucleoside in mRNA + (R)-4'-phosphopantetheine + 2 H(+). It carries out the reaction a 5'-end FAD-phospho-ribonucleoside in mRNA + H2O = a 5'-end phospho-adenosine-phospho-ribonucleoside in mRNA + FMN + 2 H(+). With respect to regulation, inhibited by fluoride ions. Its function is as follows. Catalyzes the asymmetric hydrolysis of diadenosine 5',5'''-P1,P4-tetraphosphate (Ap4A) to yield AMP and ATP. Exhibits decapping activity towards FAD-capped RNAs and dpCoA-capped RNAs in vitro. This Sus scrofa (Pig) protein is Bis(5'-nucleosyl)-tetraphosphatase [asymmetrical] (NUDT2).